The chain runs to 664 residues: Putative membrane protein Bcell_0381 (664 aa).

Acidic residues predominate over residues 588-616; that stretch reads DVTQDENGEEKSEEDNKEEIVEENTEEDN. Positions 588 to 622 are disordered; it reads DVTQDENGEEKSEEDNKEEIVEENTEEDNKEEKTI. A helical membrane pass occupies residues 636-656; the sequence is YQFLLAGIIMLVGGSCIYVFY.

The protein resides in the cell membrane. In Evansella cellulosilytica (strain ATCC 21833 / DSM 2522 / FERM P-1141 / JCM 9156 / N-4) (Bacillus cellulosilyticus), this protein is Putative membrane protein Bcell_0381.